Here is a 943-residue protein sequence, read N- to C-terminus: Zinc finger BED domain-containing protein 39 (943 aa).

Residues 1-99 are disordered; it reads MSSVSSDIDG…DIAMDVSGST (99 aa). Over residues 12 to 21 the composition is skewed to basic and acidic residues; sequence PETKRFRIDV. The span at 50 to 72 shows a compositional bias: low complexity; the sequence is SPAAPSSASYRSSNSSVISSSES. Basic and acidic residues predominate over residues 73-85; the sequence is PIKDEDVDVHDGQ. The segment at 184–235 adopts a BED-type; degenerate zinc-finger fold; that stretch reads NKQTPVWKYFVYNKTENLSRCIVGDCTYMLKGPHTSTLACHLKKHTREYSEF. Disordered regions lie at residues 242-315 and 328-348; these read YSRT…KEPS and RQATNNSNGSPPTTPHAPQLP. A compositionally biased stretch (polar residues) spans 262 to 276; that stretch reads TLQTQNTPRQTGSPA. Low complexity predominate over residues 277-292; the sequence is STCNTNSNTSSSVSSG. Polar residues predominate over residues 328-338; it reads RQATNNSNGSP.

As to expression, expressed in distal tip cells and in germline cells.

The protein resides in the nucleus. The protein localises to the cytoplasm. In terms of biological role, regulates the timing and orientation of distal tip cell migration during gonadal development. May act in parallel to cacn-1 and Rac GTPases to control the anterior and posterior migration of distal tip cells. The protein is Zinc finger BED domain-containing protein 39 of Caenorhabditis elegans.